Reading from the N-terminus, the 362-residue chain is Myricetin 3'-O-methyltransferase 4 (362 aa).

D229 is an S-adenosyl-L-methionine binding site. The active-site Proton acceptor is the H267.

The protein belongs to the class I-like SAM-binding methyltransferase superfamily. Cation-independent O-methyltransferase family. As to quaternary structure, homodimer. Mainly expressed in stem and petiole trichomes.

The catalysed reaction is myricetin + S-adenosyl-L-methionine = laricitrin + S-adenosyl-L-homocysteine + H(+). The protein operates within flavonoid metabolism. In terms of biological role, flavonoid 3'-O-methyltransferase involved in the biosynthesis of polymethoxylated flavonoids natural products such as myricetin derivatives, aroma compounds possessing antioxidant properties and exhibiting pharmacological activities such as anti-carcinogen, anti-viral, anti-thrombotic, anti-diabetic, anti-atherosclerotic, and anti-inflammatory effects. Catalyzes S-adenosylmethionine-dependent regioselective 3'-O-methylation of flavonoids; active on various hydroxylated flavonoid substrates, including myricetin, thus producing 3'-methyl myricetin (laricitrin). The chain is Myricetin 3'-O-methyltransferase 4 from Solanum lycopersicum (Tomato).